The primary structure comprises 700 residues: Elongation factor G 1 (700 aa).

The tr-type G domain maps to 8 to 290 (ERYRNIGISA…AVIDYLPSPA (283 aa)). Residues 17 to 24 (AHIDAGKT), 88 to 92 (DTPGH), and 142 to 145 (NKMD) each bind GTP.

It belongs to the TRAFAC class translation factor GTPase superfamily. Classic translation factor GTPase family. EF-G/EF-2 subfamily.

The protein resides in the cytoplasm. In terms of biological role, catalyzes the GTP-dependent ribosomal translocation step during translation elongation. During this step, the ribosome changes from the pre-translocational (PRE) to the post-translocational (POST) state as the newly formed A-site-bound peptidyl-tRNA and P-site-bound deacylated tRNA move to the P and E sites, respectively. Catalyzes the coordinated movement of the two tRNA molecules, the mRNA and conformational changes in the ribosome. The polypeptide is Elongation factor G 1 (Bordetella bronchiseptica (strain ATCC BAA-588 / NCTC 13252 / RB50) (Alcaligenes bronchisepticus)).